The sequence spans 290 residues: 33 kDa chaperonin (290 aa).

2 disulfides stabilise this stretch: Cys235–Cys237 and Cys268–Cys271.

It belongs to the HSP33 family. Under oxidizing conditions two disulfide bonds are formed involving the reactive cysteines. Under reducing conditions zinc is bound to the reactive cysteines and the protein is inactive.

It localises to the cytoplasm. In terms of biological role, redox regulated molecular chaperone. Protects both thermally unfolding and oxidatively damaged proteins from irreversible aggregation. Plays an important role in the bacterial defense system toward oxidative stress. This Streptococcus pyogenes serotype M5 (strain Manfredo) protein is 33 kDa chaperonin.